A 101-amino-acid polypeptide reads, in one-letter code: Vacuolar ATPase assembly integral membrane protein VMA21 (101 aa).

At 1–25 the chain is on the cytoplasmic side; sequence MERPDKAALNALQPPEFRNESSLAS. Residues 26-46 form a helical membrane-spanning segment; the sequence is TLKTLLFFTALMITVPIGLYF. At 47–65 the chain is on the lumenal side; sequence TTKSYIFEGALGMSNRDSY. A helical membrane pass occupies residues 66-86; sequence FYAAIVAVVAVHVVLALFVYV. Topologically, residues 87 to 101 are cytoplasmic; sequence AWNEGSRQWREGKQD.

The protein belongs to the VMA21 family. As to quaternary structure, associates with the V0 complex of the vacuolar ATPase (V-ATPase). Interacts with ATP6AP2.

The protein resides in the endoplasmic reticulum membrane. It localises to the endoplasmic reticulum-Golgi intermediate compartment membrane. Its subcellular location is the cytoplasmic vesicle. The protein localises to the COPII-coated vesicle membrane. In terms of biological role, required for the assembly of the V0 complex of the vacuolar ATPase (V-ATPase) in the endoplasmic reticulum. The polypeptide is Vacuolar ATPase assembly integral membrane protein VMA21 (Homo sapiens (Human)).